A 181-amino-acid polypeptide reads, in one-letter code: MTNSGALDTKFHALIQDQIRSEFTASQQYIAIAVFFDGADLPQLAKHFYAQALEERNHAMMLVQYLLDRDVEVEIPGIDPVCNNFTTPRDALALALDQERTVTEQISRLASVARDEGDHLGEQFMQWFLKEQVEEVAAMTTLVRIADRAGSNLFHIEDFVAREMSAAGADPTAPRAAGGAL.

Positions 5-150 (GALDTKFHAL…TLVRIADRAG (146 aa)) constitute a Ferritin-like diiron domain. Residue K10 forms an Isoglutamyl lysine isopeptide (Lys-Gln) (interchain with Q-Cter in protein Pup) linkage. Fe cation contacts are provided by E22, E55, H58, E99, and Q132.

Belongs to the ferritin family. Prokaryotic subfamily. In terms of assembly, homooligomer of 24 subunits that are packed together to form an approximately spherical molecule with a central cavity, in which large amounts of iron can be stored.

The catalysed reaction is 4 Fe(2+) + O2 + 4 H(+) = 4 Fe(3+) + 2 H2O. Iron-storage protein that displays ferroxidase activity, catalyzing the oxidation of Fe(2+) ions into Fe(3+) ions, that can then be deposited as a ferric-oxide mineral core within the central cavity of the protein complex. The chain is Ferritin BfrB (bfrB) from Mycolicibacterium smegmatis (strain ATCC 700084 / mc(2)155) (Mycobacterium smegmatis).